Here is a 272-residue protein sequence, read N- to C-terminus: MTRQWETLREYDEIKYEFFEGIAKVTINRPEVRNAFTPKTVAEMIDAFSRARDDQNVSVIVLTGEGDKAFCSGGDQKKRGHGGYVGEDDIPRLNVLDLQRLIRVIPKPVIAMVRGYAIGGGNVLNVVCDLTIAADNAIFGQTGPKVGSFDAGYGSGYLARIVGHKKAREIWYLCRQYNAQEALDMGLVNTVVPLEQVEDETVKWCKDIMQHSPTALRFLKAAMNADTDGLAGLQQMAGDATLLYYTTDEAKEGRDAFKEKRNPDFDQFPKFP.

Substrate is bound by residues R33, 72–76 (SGGDQ), Y84, 116–120 (YAIGG), T142, S148, Y245, and K260. 141 to 143 (QTG) lines the hydrogencarbonate pocket.

It belongs to the enoyl-CoA hydratase/isomerase family. MenB subfamily. It depends on hydrogencarbonate as a cofactor.

It catalyses the reaction 2-succinylbenzoyl-CoA + H(+) = 1,4-dihydroxy-2-naphthoyl-CoA + H2O. It functions in the pathway quinol/quinone metabolism; 1,4-dihydroxy-2-naphthoate biosynthesis; 1,4-dihydroxy-2-naphthoate from chorismate: step 6/7. The protein operates within quinol/quinone metabolism; menaquinone biosynthesis. In terms of biological role, converts o-succinylbenzoyl-CoA (OSB-CoA) to 1,4-dihydroxy-2-naphthoyl-CoA (DHNA-CoA). The polypeptide is 1,4-dihydroxy-2-naphthoyl-CoA synthase (Staphylococcus epidermidis (strain ATCC 35984 / DSM 28319 / BCRC 17069 / CCUG 31568 / BM 3577 / RP62A)).